We begin with the raw amino-acid sequence, 308 residues long: Olfactory receptor 2D2 (308 aa).

At 1–25 (MRQINQTQVTEFLLLGLSDGPHTEQ) the chain is on the extracellular side. Asparagine 5 is a glycosylation site (N-linked (GlcNAc...) asparagine). The helical transmembrane segment at 26–49 (LLFIVLLGVYLVTVLGNLLLISLV) threads the bilayer. Topologically, residues 50–57 (HVDSQLHT) are cytoplasmic. The chain crosses the membrane as a helical span at residues 58–79 (PMYFFLCNLSLADLCFSTNIVP). The Extracellular segment spans residues 80 to 100 (QALVHLLSRKKVIAFTLCAAR). Residues 101-120 (LLFFLIFGCTQCALLAVMSY) traverse the membrane as a helical segment. The Cytoplasmic segment spans residues 121–139 (DRYVAICNPLRYPNIMTWK). Residues 140–158 (VCVQLATGSWTSGILVSVV) traverse the membrane as a helical segment. The Extracellular segment spans residues 159 to 195 (DTTFILRLPYRGSNSIAHFFCEAPALLILASTDTHAS). The chain crosses the membrane as a helical span at residues 196–219 (EMAIFLMGVVILLIPVFLILVSYG). The Cytoplasmic segment spans residues 220–236 (RIIVTVVKMKSTVGSLK). Residues 237–259 (AFSTCGSHLMVVILFYGSAIITY) form a helical membrane-spanning segment. Over 260 to 270 (MTPKSSKQQEK) the chain is Extracellular. A helical membrane pass occupies residues 271–290 (SVSVFYAIVTPMLNPLIYSL). At 291–308 (RNKDVKAALRKVATRNFP) the chain is on the cytoplasmic side.

The protein belongs to the G-protein coupled receptor 1 family.

The protein resides in the cell membrane. Odorant receptor. The polypeptide is Olfactory receptor 2D2 (OR2D2) (Homo sapiens (Human)).